The primary structure comprises 42 residues: MANTGVTGRIPLWLIGTVVGSLAIGLLAIFFYGSYVGLGSSL.

Residues 10–30 (IPLWLIGTVVGSLAIGLLAIF) traverse the membrane as a helical segment.

The protein belongs to the PsbJ family. In terms of assembly, PSII is composed of 1 copy each of membrane proteins PsbA, PsbB, PsbC, PsbD, PsbE, PsbF, PsbH, PsbI, PsbJ, PsbK, PsbL, PsbM, PsbT, PsbX, PsbY, PsbZ, Psb30/Ycf12, at least 3 peripheral proteins of the oxygen-evolving complex and a large number of cofactors. It forms dimeric complexes.

It localises to the plastid. The protein localises to the chloroplast thylakoid membrane. In terms of biological role, one of the components of the core complex of photosystem II (PSII). PSII is a light-driven water:plastoquinone oxidoreductase that uses light energy to abstract electrons from H(2)O, generating O(2) and a proton gradient subsequently used for ATP formation. It consists of a core antenna complex that captures photons, and an electron transfer chain that converts photonic excitation into a charge separation. In Stigeoclonium helveticum (Green alga), this protein is Photosystem II reaction center protein J.